The following is a 460-amino-acid chain: MASIARDIFKAYDIRGIVGKTLTDEAAYLIGKAIAAKAAEKGITRIALGRDGRLSGPELMEHIRRGFTDSGINVLNVGMVATPMLYFAAVNECGGSGVMITGSHNPPDYNGFKMMLGGDTLAGEAIQELLSIIEKDGFAAAGKQGSVTEKDISGEYLKHITGHIRLKRPMNIAIDAGNGVGGAFAGKLYKGLGNKVTELFCDVDGTFPNHHPDPSKPKNLQDLIAALKNGDAEIGLAFDGDADRLGVVTKDGNIIYPDRQLMLFAQDVLNRNPGAKVIFDVKSTRLLAPWIKEHGGKAIMEKTGHSFIKSAMKETGAPVAGEMSGHIFFKERWFGFDDGLYAGARLLEILSASDNPSEVLNNLPQSISTPELNIALPEGSNGHQVIDELAAKAEFEGATEIITIDGLRVEFPDGFGLMRASNTTPILVLRFEADTQEAIERIQNQFKAVIESNPNLIWPL.

The Phosphoserine intermediate role is filled by S103. Mg(2+) is bound at residue S103. Substrate-binding positions include 103–104 (SH) and K113. Positions 239, 241, and 243 each coordinate Mg(2+). Substrate is bound by residues 243 to 244 (DR), T303, and 322 to 324 (EMS).

This sequence belongs to the phosphohexose mutase family. The cofactor is Mg(2+).

Its subcellular location is the cytoplasm. The catalysed reaction is alpha-D-glucose 1-phosphate = alpha-D-glucose 6-phosphate. Its function is as follows. This enzyme participates in both the breakdown and synthesis of glucose. The polypeptide is Phosphoglucomutase (pgm) (Neisseria meningitidis serogroup B (strain ATCC BAA-335 / MC58)).